The chain runs to 121 residues: uncharacterized protein (121 aa).

A disordered region spans residues 101–121; the sequence is SIEPTATGSPETRDPDPSAYA. The segment covering 111-121 has biased composition (basic and acidic residues); the sequence is ETRDPDPSAYA.

It localises to the mitochondrion. This is an uncharacterized protein from Arabidopsis thaliana (Mouse-ear cress).